The following is a 780-amino-acid chain: Protein phosphatase 1 regulatory subunit 21 (780 aa).

Coiled-coil stretches lie at residues 1–209 and 556–605; these read MASA…NLHE and ESRE…DRLR. Residues 84 to 104 form a disordered region; sequence EPRGKKNKKSGESSSQLSQEQ. The segment covering 95–104 has biased composition (low complexity); sequence ESSSQLSQEQ. Residue threonine 652 is modified to Phosphothreonine. Residues 694 to 742 are a coiled coil; it reads AECRALSKRLALAEKSKETLTEEMRLASQNISRLQDELMTTKRSYEDQL.

Component of the FERRY complex, composed of five subunits: TBCK, PPP1R21, FERRY3, CRYZL1 and GATAD1, with a ratio of 1:2:1:2:4 respectively. PPP1R21 serves as a binding hub connecting all five complex subunits to mediate the binding to specific mitochondrial mRNAs. Interacts with the GTP-bound form of RAB5A (via its C-terminal region); linking the mRNP complex onto trafficking endosomes for active mRNA transport. Interacts with PPP1CA. As to expression, expressed at 16 dpc in the cortex (at protein level).

It is found in the early endosome. In terms of biological role, component of the FERRY complex (Five-subunit Endosomal Rab5 and RNA/ribosome intermediary). The FERRY complex directly interacts with mRNAs and RAB5A, and functions as a RAB5A effector involved in the localization and the distribution of specific mRNAs most likely by mediating their endosomal transport. The complex recruits mRNAs and ribosomes to early endosomes through direct mRNA-interaction. In the complex, PPP1R21 serves as a binding hub connecting all five complex subunits and mediating the binding to mRNA and early endosomes via RAB5A. Putative regulator of protein phosphatase 1 (PP1) activity. May play a role in the endosomal sorting process or in endosome maturation pathway. The protein is Protein phosphatase 1 regulatory subunit 21 (Ppp1r21) of Mus musculus (Mouse).